The chain runs to 925 residues: Bifunctional imidazolonepropionase/histidine ammonia-lyase (925 aa).

The segment at 1 to 414 is imidazolonepropionase; sequence MTKNSSTVFT…IKPHVRMEPF (414 aa). Positions 73 and 75 each coordinate Fe(3+). Residues H73 and H75 each contribute to the Zn(2+) site. 3 residues coordinate 4-imidazolone-5-propanoate: R82, Y145, and H178. Y145 serves as a coordination point for N-formimidoyl-L-glutamate. H243 is a Fe(3+) binding site. H243 contributes to the Zn(2+) binding site. Residue Q246 coordinates 4-imidazolone-5-propanoate. Position 318 (D318) interacts with Fe(3+). D318 contributes to the Zn(2+) binding site. N-formimidoyl-L-glutamate is bound by residues N320 and G322. T323 contributes to the 4-imidazolone-5-propanoate binding site. A histidine ammonia-lyase region spans residues 415–925; it reads MTIILKPGSV…SAGILPDLEA (511 aa). The segment at residues 556–558 is a cross-link (5-imidazolinone (Ala-Gly)); the sequence is ASG. The residue at position 557 (S557) is a 2,3-didehydroalanine (Ser).

The protein in the N-terminal section; belongs to the metallo-dependent hydrolases superfamily. HutI family. In the C-terminal section; belongs to the PAL/histidase family. It depends on Zn(2+) as a cofactor. Requires Fe(3+) as cofactor. Contains an active site 4-methylidene-imidazol-5-one (MIO), which is formed autocatalytically by cyclization and dehydration of residues Ala-Ser-Gly.

Its subcellular location is the cytoplasm. The enzyme catalyses 4-imidazolone-5-propanoate + H2O = N-formimidoyl-L-glutamate. The catalysed reaction is L-histidine = trans-urocanate + NH4(+). It participates in amino-acid degradation; L-histidine degradation into L-glutamate; N-formimidoyl-L-glutamate from L-histidine: step 1/3. The protein operates within amino-acid degradation; L-histidine degradation into L-glutamate; N-formimidoyl-L-glutamate from L-histidine: step 3/3. Catalyzes the hydrolytic cleavage of the carbon-nitrogen bond in imidazolone-5-propanoate to yield N-formimidoyl-L-glutamate. It is the third step in the universal histidine degradation pathway. The protein is Bifunctional imidazolonepropionase/histidine ammonia-lyase (hutIH) of Brucella melitensis biotype 1 (strain ATCC 23456 / CCUG 17765 / NCTC 10094 / 16M).